A 214-amino-acid polypeptide reads, in one-letter code: Chaperone protein TorD (214 aa).

It belongs to the TorD/DmsD family. TorD subfamily.

The protein localises to the cytoplasm. In terms of biological role, involved in the biogenesis of TorA. Acts on TorA before the insertion of the molybdenum cofactor and, as a result, probably favors a conformation of the apoenzyme that is competent for acquiring the cofactor. The sequence is that of Chaperone protein TorD from Aeromonas salmonicida (strain A449).